The chain runs to 232 residues: Large ribosomal subunit protein uL1 (232 aa).

This sequence belongs to the universal ribosomal protein uL1 family. As to quaternary structure, part of the 50S ribosomal subunit.

Binds directly to 23S rRNA. The L1 stalk is quite mobile in the ribosome, and is involved in E site tRNA release. In terms of biological role, protein L1 is also a translational repressor protein, it controls the translation of the L11 operon by binding to its mRNA. The chain is Large ribosomal subunit protein uL1 from Bordetella petrii (strain ATCC BAA-461 / DSM 12804 / CCUG 43448).